The sequence spans 319 residues: ATP-dependent 6-phosphofructokinase (319 aa).

Glycine 11 contacts ATP. Residue 21-25 (RAVVR) participates in ADP binding. ATP-binding positions include 72–73 (RC) and 102–105 (GEGS). Glutamate 103 contributes to the Mg(2+) binding site. Substrate is bound at residue 126 to 128 (TID). Aspartate 128 functions as the Proton acceptor in the catalytic mechanism. Residue lysine 155 participates in ADP binding. Substrate is bound by residues arginine 163 and 170–172 (MGR). ADP is bound by residues 186-188 (GAE), arginine 212, and 214-216 (KIN). Substrate-binding positions include glutamate 223, arginine 244, and 250-253 (HVQR).

It belongs to the phosphofructokinase type A (PFKA) family. ATP-dependent PFK group I subfamily. Prokaryotic clade 'B1' sub-subfamily. In terms of assembly, homotetramer. The cofactor is Mg(2+).

It is found in the cytoplasm. It carries out the reaction beta-D-fructose 6-phosphate + ATP = beta-D-fructose 1,6-bisphosphate + ADP + H(+). It functions in the pathway carbohydrate degradation; glycolysis; D-glyceraldehyde 3-phosphate and glycerone phosphate from D-glucose: step 3/4. Its activity is regulated as follows. Allosterically activated by ADP and other diphosphonucleosides, and allosterically inhibited by phosphoenolpyruvate. Functionally, catalyzes the phosphorylation of D-fructose 6-phosphate to fructose 1,6-bisphosphate by ATP, the first committing step of glycolysis. The protein is ATP-dependent 6-phosphofructokinase of Thermotoga neapolitana (strain ATCC 49049 / DSM 4359 / NBRC 107923 / NS-E).